Consider the following 238-residue polypeptide: Arginine ABC transporter permease protein ArtQ (238 aa).

The Periplasmic segment spans residues 1 to 14; sequence MNEFFPLASAAGMT. One can recognise an ABC transmembrane type-1 domain in the interval 11 to 223; it reads AGMTVGLAVC…VITLLSQYIL (213 aa). The chain crosses the membrane as a helical span at residues 15-35; it reads VGLAVCALIVGLALAMFFAVW. The Cytoplasmic segment spans residues 36–48; it reads ESAKWRPVAWAGS. The chain crosses the membrane as a helical span at residues 49 to 69; the sequence is ALVTILRGLPEILVVLFIYFG. Residues 70–98 are Periplasmic-facing; the sequence is SSQLLLTLSDGFTINLGFVQIPVQMDIEN. Residues 99–119 traverse the membrane as a helical segment; sequence FDVSPFLCGVIALSLLYAAYA. The Cytoplasmic segment spans residues 120-168; that stretch reads SQTLRGALKAVPVGQWESGQALGLSKSAIFFRLVMPQMWRHALPGLGNQ. The chain crosses the membrane as a helical span at residues 169 to 189; it reads WLVLLKDTALVSLISVNDLML. The Periplasmic portion of the chain corresponds to 190–201; that stretch reads QTKSIATRTQEP. The helical transmembrane segment at 202-222 threads the bilayer; it reads FTWYIVAAAIYLVITLLSQYI. The Cytoplasmic segment spans residues 223–238; the sequence is LKRIDLRATRFERRPS.

This sequence belongs to the binding-protein-dependent transport system permease family. HisMQ subfamily. The complex is composed of two ATP-binding proteins (ArtP), two transmembrane proteins (ArtM and ArtQ) and two solute-binding proteins (ArtJ and ArtI).

The protein resides in the cell inner membrane. Part of the ABC transporter complex ArtPIQMJ involved in arginine transport. Probably responsible for the translocation of the substrate across the membrane. This is Arginine ABC transporter permease protein ArtQ (artQ) from Escherichia coli O6:H1 (strain CFT073 / ATCC 700928 / UPEC).